Reading from the N-terminus, the 451-residue chain is Glycylpeptide N-tetradecanoyltransferase (451 aa).

Tetradecanoyl-CoA is bound by residues 177–179 and 185–189; these read LCI and NKRLA. The active-site Proton acceptor; via carboxylate is L451.

Belongs to the NMT family. In terms of assembly, monomer.

It localises to the cytoplasm. The catalysed reaction is N-terminal glycyl-[protein] + tetradecanoyl-CoA = N-tetradecanoylglycyl-[protein] + CoA + H(+). Competitively inhibited by SC-58272, a peptidomimetic derived from the N-terminal sequence of a natural substrate. Functionally, adds a myristoyl group to the N-terminal glycine residue of certain cellular proteins. Substrate specificity requires an N-terminal glycine in the nascent polypeptide substrates. Ser is present at position 5 in almost all known N-myristoyl proteins and Lys is commonly encountered at postion 6. Basic residues are preferred at positions 7 and 8. This chain is Glycylpeptide N-tetradecanoyltransferase (NMT1), found in Candida albicans (strain SC5314 / ATCC MYA-2876) (Yeast).